Reading from the N-terminus, the 446-residue chain is Coagulation factor VII (446 aa).

An N-terminal signal peptide occupies residues M1 to A24. Residues V25–R41 constitute a propeptide that is removed on maturation. The Gla domain maps to A42–S86. E47, E48, E55, E57, E60, E61, E66, E67, E70, and E76 each carry 4-carboxyglutamate. C58 and C63 are joined by a disulfide. The EGF-like 1; calcium-binding domain occupies D87–E123. 10 disulfide bridges follow: C91–C102, C96–C111, C113–C122, C132–C143, C139–C153, C155–C168, C176–C303, C200–C205, C219–C235, and C351–C370. S93 is a glycosylation site (O-linked (Glc...) serine; alternate). Residue S93 is glycosylated (O-linked (Xyl...) serine; alternate). Position 104 is a (3R)-3-hydroxyaspartate (D104). The 42-residue stretch at E128 to K169 folds into the EGF-like 2 domain. N186 carries N-linked (GlcNAc...) asparagine glycosylation. The 240-residue stretch at I194–D433 folds into the Peptidase S1 domain. Catalysis depends on H234, which acts as the Charge relay system. An N-linked (GlcNAc...) asparagine glycan is attached at N244. Residue D283 is the Charge relay system of the active site. D379 contacts substrate. A disulfide bridge links C381 with C409. S385 serves as the catalytic Charge relay system.

This sequence belongs to the peptidase S1 family. As to quaternary structure, heterodimer of a light chain and a heavy chain linked by a disulfide bond. In terms of processing, the vitamin K-dependent, enzymatic carboxylation of some glutamate residues allows the modified protein to bind calcium. The iron and 2-oxoglutarate dependent 3-hydroxylation of aspartate and asparagine is (R) stereospecific within EGF domains. Post-translationally, can be either O-glucosylated or O-xylosylated at Ser-93 by POGLUT1. In terms of tissue distribution, plasma and liver.

It localises to the secreted. It carries out the reaction Selective cleavage of Arg-|-Ile bond in factor X to form factor Xa.. Functionally, initiates the extrinsic pathway of blood coagulation. Serine protease that circulates in the blood in a zymogen form. Factor VII is converted to factor VIIa by factor Xa, factor XIIa, factor IXa, or thrombin by minor proteolysis. In the presence of tissue factor and calcium ions, factor VIIa then converts factor X to factor Xa by limited proteolysis. Factor VIIa also converts factor IX to factor IXa in the presence of tissue factor and calcium. In Mus musculus (Mouse), this protein is Coagulation factor VII (F7).